The primary structure comprises 206 residues: Small ribosomal subunit protein uS4 (206 aa).

The S4 RNA-binding domain maps to 96–156 (GRLDNVVYRM…EKSKKQARIK (61 aa)).

It belongs to the universal ribosomal protein uS4 family. Part of the 30S ribosomal subunit. Contacts protein S5. The interaction surface between S4 and S5 is involved in control of translational fidelity.

In terms of biological role, one of the primary rRNA binding proteins, it binds directly to 16S rRNA where it nucleates assembly of the body of the 30S subunit. With S5 and S12 plays an important role in translational accuracy. This chain is Small ribosomal subunit protein uS4, found in Haemophilus influenzae (strain ATCC 51907 / DSM 11121 / KW20 / Rd).